Consider the following 258-residue polypeptide: Ribosomal RNA large subunit methyltransferase E (258 aa).

5 residues coordinate S-adenosyl-L-methionine: Gly-58, Trp-60, Asp-78, Asp-96, and Asp-120. The active-site Proton acceptor is Lys-160.

The protein belongs to the class I-like SAM-binding methyltransferase superfamily. RNA methyltransferase RlmE family.

The protein resides in the cytoplasm. It catalyses the reaction uridine(2552) in 23S rRNA + S-adenosyl-L-methionine = 2'-O-methyluridine(2552) in 23S rRNA + S-adenosyl-L-homocysteine + H(+). Specifically methylates the uridine in position 2552 of 23S rRNA at the 2'-O position of the ribose in the fully assembled 50S ribosomal subunit. This is Ribosomal RNA large subunit methyltransferase E from Methanococcus maripaludis (strain C7 / ATCC BAA-1331).